A 342-amino-acid chain; its full sequence is Ferredoxin--NADP reductase (342 aa).

Cys-17, Asp-36, Gln-44, Tyr-49, Ile-89, Phe-124, Asp-289, and Thr-330 together coordinate FAD.

It belongs to the ferredoxin--NADP reductase type 2 family. Homodimer. The cofactor is FAD.

It carries out the reaction 2 reduced [2Fe-2S]-[ferredoxin] + NADP(+) + H(+) = 2 oxidized [2Fe-2S]-[ferredoxin] + NADPH. In Rhodopseudomonas palustris (strain BisB18), this protein is Ferredoxin--NADP reductase.